Reading from the N-terminus, the 436-residue chain is GTPase Der (436 aa).

EngA-type G domains lie at 4 to 167 (PVVA…PEVE) and 174 to 350 (VRVA…EQRT). Residues 10–17 (GRPNVGKS), 57–61 (DTGGL), 120–123 (NKVD), 180–187 (GRPNVGKS), 227–231 (DTAGL), and 292–295 (NKWD) each bind GTP. The region spanning 351–435 (RRISTSEVND…PLRIILRRKN (85 aa)) is the KH-like domain.

It belongs to the TRAFAC class TrmE-Era-EngA-EngB-Septin-like GTPase superfamily. EngA (Der) GTPase family. In terms of assembly, associates with the 50S ribosomal subunit.

GTPase that plays an essential role in the late steps of ribosome biogenesis. The chain is GTPase Der from Gemmatimonas aurantiaca (strain DSM 14586 / JCM 11422 / NBRC 100505 / T-27).